The chain runs to 215 residues: Na(+)-translocating NADH-quinone reductase subunit D (215 aa).

6 consecutive transmembrane segments (helical) span residues 14–34 (PFIS…ALAV), 42–62 (FVMA…ISLI), 72–92 (IIVQ…LLKA), 103–123 (VFVG…AYAM), 131–151 (FLDG…VGTI), and 178–198 (NGML…IWVL).

This sequence belongs to the NqrDE/RnfAE family. In terms of assembly, composed of six subunits; NqrA, NqrB, NqrC, NqrD, NqrE and NqrF.

The protein resides in the cell inner membrane. It carries out the reaction a ubiquinone + n Na(+)(in) + NADH + H(+) = a ubiquinol + n Na(+)(out) + NAD(+). Functionally, NQR complex catalyzes the reduction of ubiquinone-1 to ubiquinol by two successive reactions, coupled with the transport of Na(+) ions from the cytoplasm to the periplasm. NqrA to NqrE are probably involved in the second step, the conversion of ubisemiquinone to ubiquinol. This Tolumonas auensis (strain DSM 9187 / NBRC 110442 / TA 4) protein is Na(+)-translocating NADH-quinone reductase subunit D.